A 258-amino-acid chain; its full sequence is Acyl-[acyl-carrier-protein]--UDP-N-acetylglucosamine O-acyltransferase (258 aa).

The protein belongs to the transferase hexapeptide repeat family. LpxA subfamily. As to quaternary structure, homotrimer.

The protein localises to the cytoplasm. It catalyses the reaction a (3R)-hydroxyacyl-[ACP] + UDP-N-acetyl-alpha-D-glucosamine = a UDP-3-O-[(3R)-3-hydroxyacyl]-N-acetyl-alpha-D-glucosamine + holo-[ACP]. It participates in glycolipid biosynthesis; lipid IV(A) biosynthesis; lipid IV(A) from (3R)-3-hydroxytetradecanoyl-[acyl-carrier-protein] and UDP-N-acetyl-alpha-D-glucosamine: step 1/6. Involved in the biosynthesis of lipid A, a phosphorylated glycolipid that anchors the lipopolysaccharide to the outer membrane of the cell. The sequence is that of Acyl-[acyl-carrier-protein]--UDP-N-acetylglucosamine O-acyltransferase from Pseudomonas putida (strain GB-1).